The following is a 394-amino-acid chain: Elongation factor Tu (394 aa).

Residues 10–205 form the tr-type G domain; the sequence is KPHMNVGTIG…SMDNYFDLPE (196 aa). The segment at 19-26 is G1; that stretch reads GHVDHGKT. 19 to 26 provides a ligand contact to GTP; it reads GHVDHGKT. Mg(2+) is bound at residue T26. The interval 61–65 is G2; it reads GITIN. Residues 82–85 are G3; that stretch reads DCPG. Residues 82 to 86 and 137 to 140 contribute to the GTP site; these read DCPGH and NKLD. Residues 137–140 form a G4 region; sequence NKLD. Positions 173–175 are G5; sequence SAF.

The protein belongs to the TRAFAC class translation factor GTPase superfamily. Classic translation factor GTPase family. EF-Tu/EF-1A subfamily. Monomer.

The protein resides in the cytoplasm. The enzyme catalyses GTP + H2O = GDP + phosphate + H(+). Functionally, GTP hydrolase that promotes the GTP-dependent binding of aminoacyl-tRNA to the A-site of ribosomes during protein biosynthesis. The sequence is that of Elongation factor Tu from Borreliella afzelii (strain PKo) (Borrelia afzelii).